We begin with the raw amino-acid sequence, 475 residues long: MSPQTETKASVGFKAGVKDYKLTYYTPDYETKDTDILAAFRVTPQPGVPPEEAGAAVRAESSTGTWTTVWTDGLTSLDRYKGRCYHIEPVAGEENQYIAYVAYPLDLFEEGSVTNMFTSIVGNVFGFKALRALRLEGLRIPPAYSKTFQGPPHGIQVERDKLNKYGRPLLGCTIKPKLGLSAKNYGRAVYECLRGGLDFTKDDENVNSQPFMRWRDRFVFCAEAIDKAQAETGEIKGHYLNATAGTCEEMIKRAVFARELGVPIVMHDYLTGGFTANTSLAHYCRDNGLLLHIHRAMHAVIDRQKNHGIHFRVLAKALRMSGGDHIHAGTVVGKLEGERGITLGFVDLLRDDFIEKDRSRGIYFTQDWVSLPGVLPVASGGIHVWHMPALTEIFGDDSVLQFGGGTLGHPWGNAPGAVANRVALEACVQARNEGGDLAREGNEIIREASKWSPELAAACEVWKEIKFEFQAMDTL.

The propeptide occupies 1-2 (MS). The residue at position 3 (P3) is an N-acetylproline. Position 14 is an N6,N6,N6-trimethyllysine (K14). Positions 123 and 173 each coordinate substrate. K175 (proton acceptor) is an active-site residue. K177 contributes to the substrate binding site. The Mg(2+) site is built by K201, D203, and E204. At K201 the chain carries N6-carboxylysine. H294 functions as the Proton acceptor in the catalytic mechanism. Positions 295, 327, and 379 each coordinate substrate.

Belongs to the RuBisCO large chain family. Type I subfamily. Heterohexadecamer of 8 large chains and 8 small chains; disulfide-linked. The disulfide link is formed within the large subunit homodimers. Mg(2+) serves as cofactor. Post-translationally, the disulfide bond which can form in the large chain dimeric partners within the hexadecamer appears to be associated with oxidative stress and protein turnover.

It is found in the plastid. Its subcellular location is the chloroplast. It catalyses the reaction 2 (2R)-3-phosphoglycerate + 2 H(+) = D-ribulose 1,5-bisphosphate + CO2 + H2O. The catalysed reaction is D-ribulose 1,5-bisphosphate + O2 = 2-phosphoglycolate + (2R)-3-phosphoglycerate + 2 H(+). Functionally, ruBisCO catalyzes two reactions: the carboxylation of D-ribulose 1,5-bisphosphate, the primary event in carbon dioxide fixation, as well as the oxidative fragmentation of the pentose substrate in the photorespiration process. Both reactions occur simultaneously and in competition at the same active site. The protein is Ribulose bisphosphate carboxylase large chain of Notothixos subaureus (Golden mistletoe).